The following is a 535-amino-acid chain: Peptide chain release factor 3 (535 aa).

Residues 8 to 277 (KRRRTFAIIS…TLVELAPPPG (270 aa)) enclose the tr-type G domain. Residues 17–24 (SHPDAGKT), 85–89 (DTPGH), and 139–142 (NKLD) contribute to the GTP site.

The protein belongs to the TRAFAC class translation factor GTPase superfamily. Classic translation factor GTPase family. PrfC subfamily.

It is found in the cytoplasm. In terms of biological role, increases the formation of ribosomal termination complexes and stimulates activities of RF-1 and RF-2. It binds guanine nucleotides and has strong preference for UGA stop codons. It may interact directly with the ribosome. The stimulation of RF-1 and RF-2 is significantly reduced by GTP and GDP, but not by GMP. The chain is Peptide chain release factor 3 from Nitrosomonas europaea (strain ATCC 19718 / CIP 103999 / KCTC 2705 / NBRC 14298).